The primary structure comprises 336 residues: Retinol dehydrogenase 14 (336 aa).

Thr5 carries the phosphothreonine modification. Position 50–56 (50–56 (GANSGLG)) interacts with NADP(+). Ser192 provides a ligand contact to substrate. Catalysis depends on Tyr217, which acts as the Proton acceptor.

This sequence belongs to the short-chain dehydrogenases/reductases (SDR) family. As to expression, widely expressed.

The enzyme catalyses all-trans-retinol + NADP(+) = all-trans-retinal + NADPH + H(+). The catalysed reaction is 9-cis-retinol + NADP(+) = 9-cis-retinal + NADPH + H(+). It catalyses the reaction 11-cis-retinol + NADP(+) = 11-cis-retinal + NADPH + H(+). It functions in the pathway cofactor metabolism; retinol metabolism. Retinol dehydrogenase with a clear preference for NADP. Displays high activity towards 9-cis, 11-cis and all-trans-retinol. Shows a very weak activity towards 13-cis-retinol. Has no activity towards steroid. The polypeptide is Retinol dehydrogenase 14 (RDH14) (Homo sapiens (Human)).